The chain runs to 128 residues: Sulfurtransferase TusD (128 aa).

Cysteine 78 (cysteine persulfide intermediate) is an active-site residue.

The protein belongs to the DsrE/TusD family. As to quaternary structure, heterohexamer, formed by a dimer of trimers. The hexameric TusBCD complex contains 2 copies each of TusB, TusC and TusD. The TusBCD complex interacts with TusE.

Its subcellular location is the cytoplasm. Functionally, part of a sulfur-relay system required for 2-thiolation of 5-methylaminomethyl-2-thiouridine (mnm(5)s(2)U) at tRNA wobble positions. Accepts sulfur from TusA and transfers it in turn to TusE. This Escherichia coli O127:H6 (strain E2348/69 / EPEC) protein is Sulfurtransferase TusD.